Consider the following 355-residue polypeptide: Lipoyl synthase (355 aa).

The RPE1 insert domain occupies 7–55 (HLSKFAYREEFAGNTEVLATAAYKEDCADASTGLTPKLPLEVEFGKMSK). [4Fe-4S] cluster contacts are provided by C86, C91, C97, C112, C116, C119, and S325. The Radical SAM core domain maps to 98–314 (WSKKHATVMI…ERVARTKGFL (217 aa)).

This sequence belongs to the radical SAM superfamily. Lipoyl synthase family. [4Fe-4S] cluster serves as cofactor.

It is found in the cytoplasm. The enzyme catalyses [[Fe-S] cluster scaffold protein carrying a second [4Fe-4S](2+) cluster] + N(6)-octanoyl-L-lysyl-[protein] + 2 oxidized [2Fe-2S]-[ferredoxin] + 2 S-adenosyl-L-methionine + 4 H(+) = [[Fe-S] cluster scaffold protein] + N(6)-[(R)-dihydrolipoyl]-L-lysyl-[protein] + 4 Fe(3+) + 2 hydrogen sulfide + 2 5'-deoxyadenosine + 2 L-methionine + 2 reduced [2Fe-2S]-[ferredoxin]. It participates in protein modification; protein lipoylation via endogenous pathway; protein N(6)-(lipoyl)lysine from octanoyl-[acyl-carrier-protein]: step 2/2. In terms of biological role, catalyzes the radical-mediated insertion of two sulfur atoms into the C-6 and C-8 positions of the octanoyl moiety bound to the lipoyl domains of lipoate-dependent enzymes, thereby converting the octanoylated domains into lipoylated derivatives. In Rickettsia bellii (strain RML369-C), this protein is Lipoyl synthase.